We begin with the raw amino-acid sequence, 476 residues long: UDP-N-acetylmuramate--L-alanine ligase (476 aa).

112–118 (GTHGKTT) is a binding site for ATP.

Belongs to the MurCDEF family.

It localises to the cytoplasm. It catalyses the reaction UDP-N-acetyl-alpha-D-muramate + L-alanine + ATP = UDP-N-acetyl-alpha-D-muramoyl-L-alanine + ADP + phosphate + H(+). It participates in cell wall biogenesis; peptidoglycan biosynthesis. Functionally, cell wall formation. This chain is UDP-N-acetylmuramate--L-alanine ligase, found in Magnetococcus marinus (strain ATCC BAA-1437 / JCM 17883 / MC-1).